An 88-amino-acid chain; its full sequence is Homeobox protein knotted-1-like 2 (88 aa).

Residues Glu-4–Ile-24 form the ELK domain. Residues Leu-25 to Asn-88 constitute a DNA-binding region (homeobox; TALE-type).

It belongs to the TALE/KNOX homeobox family. Expressed in all tissues examined. Highest expression in leaves.

The protein localises to the nucleus. The polypeptide is Homeobox protein knotted-1-like 2 (KNOX2) (Zea mays (Maize)).